The sequence spans 441 residues: MQQATAPKISFVSLGCPKALVDSERIITRLRAEGYELARKHDGADLVIVNTCGFLDSAKQESLAAIGEAMATNGKVIVTGCMGAEPEQIEAAYPGVLSITGPQQYESVLEAVHRARPALHNPHLDLVPPQGVRLTPRHYAYLKISEGCNNRCSFCIIPKLRGDLVSRPAGDVLREAEKLVAAGVKELLVISQDTSAYGVDVKYAESPWKDRAVRAKFLDLASELGELGAWVRLHYVYPYPHVDEVIGLMADGKVLPYLDIPFQHASPDVLKLMKRPAAQDKTLDRIKRWREQCPDLALRSTFIVGFPGETERDFEFLLEWLDEAEIDRLGAFKYEPVAGAPSNALPDQIADEVKQERWNRLMARQQAISARRLKRKVGTRQQVIIDEIGPTVAKGRSKADAPDIDGAVYLSSRRPLRVGEIVTAKIDRADAYDLHGTVAGF.

The MTTase N-terminal domain occupies 7–117; that stretch reads PKISFVSLGC…VLEAVHRARP (111 aa). Cysteine 16, cysteine 52, cysteine 81, cysteine 148, cysteine 152, and cysteine 155 together coordinate [4Fe-4S] cluster. One can recognise a Radical SAM core domain in the interval 134 to 371; sequence LTPRHYAYLK…MARQQAISAR (238 aa). In terms of domain architecture, TRAM spans 374–440; sequence KRKVGTRQQV…AYDLHGTVAG (67 aa).

Belongs to the methylthiotransferase family. RimO subfamily. It depends on [4Fe-4S] cluster as a cofactor.

It is found in the cytoplasm. The catalysed reaction is L-aspartate(89)-[ribosomal protein uS12]-hydrogen + (sulfur carrier)-SH + AH2 + 2 S-adenosyl-L-methionine = 3-methylsulfanyl-L-aspartate(89)-[ribosomal protein uS12]-hydrogen + (sulfur carrier)-H + 5'-deoxyadenosine + L-methionine + A + S-adenosyl-L-homocysteine + 2 H(+). Catalyzes the methylthiolation of an aspartic acid residue of ribosomal protein uS12. The chain is Ribosomal protein uS12 methylthiotransferase RimO from Rhodopseudomonas palustris (strain ATCC BAA-98 / CGA009).